The primary structure comprises 129 residues: Protein RfbJ (129 aa).

It belongs to the glycosyltransferase 2 family.

Its pathway is bacterial outer membrane biogenesis; lipopolysaccharide biosynthesis. The sequence is that of Protein RfbJ (rfbJ) from Shigella flexneri.